We begin with the raw amino-acid sequence, 419 residues long: UDP-N-acetylglucosamine 1-carboxyvinyltransferase (419 aa).

22 to 23 is a binding site for phosphoenolpyruvate; it reads KN. A UDP-N-acetyl-alpha-D-glucosamine-binding site is contributed by Arg-91. Cys-115 acts as the Proton donor in catalysis. Position 115 is a 2-(S-cysteinyl)pyruvic acid O-phosphothioketal (Cys-115). UDP-N-acetyl-alpha-D-glucosamine is bound by residues 120–124, 160–163, Asp-305, and Val-327; these read RPVDL and KVSV.

The protein belongs to the EPSP synthase family. MurA subfamily.

It is found in the cytoplasm. The enzyme catalyses phosphoenolpyruvate + UDP-N-acetyl-alpha-D-glucosamine = UDP-N-acetyl-3-O-(1-carboxyvinyl)-alpha-D-glucosamine + phosphate. Its pathway is cell wall biogenesis; peptidoglycan biosynthesis. Its function is as follows. Cell wall formation. Adds enolpyruvyl to UDP-N-acetylglucosamine. This chain is UDP-N-acetylglucosamine 1-carboxyvinyltransferase, found in Shigella sonnei (strain Ss046).